A 470-amino-acid chain; its full sequence is UDP-N-acetylmuramate--L-alanine ligase (470 aa).

114-120 (GTHGKTT) lines the ATP pocket.

This sequence belongs to the MurCDEF family.

It is found in the cytoplasm. It catalyses the reaction UDP-N-acetyl-alpha-D-muramate + L-alanine + ATP = UDP-N-acetyl-alpha-D-muramoyl-L-alanine + ADP + phosphate + H(+). Its pathway is cell wall biogenesis; peptidoglycan biosynthesis. Its function is as follows. Cell wall formation. This chain is UDP-N-acetylmuramate--L-alanine ligase, found in Xanthobacter autotrophicus (strain ATCC BAA-1158 / Py2).